The primary structure comprises 214 residues: uncharacterized protein (214 aa).

A run of 4 helical transmembrane segments spans residues 43 to 63 (IQKP…AAHI), 84 to 104 (IEWA…IPVI), 116 to 136 (ALVI…EYFI), and 150 to 170 (PVTR…FGIF).

It is found in the host membrane. This is an uncharacterized protein from Citrus leprosis virus C (isolate Citrus sinesis/Brazil/Cordeiropolis/2003) (CiLV-C).